Here is a 66-residue protein sequence, read N- to C-terminus: Large ribosomal subunit protein uL29 (66 aa).

This sequence belongs to the universal ribosomal protein uL29 family.

In Brucella abortus (strain S19), this protein is Large ribosomal subunit protein uL29.